The sequence spans 532 residues: MTFLLLLLFCFLSPAISSAHSIPSTLDGPFVPVTVPLDTSLRGQAIDLPDTDPRVRRRVIGFEPEQISLSLSSDHDSIWVSWITGEFQIGKKVKPLDPTSINSVVQFGTLRHSLSHEAKGHSLVYSQLYPFDGLLNYTSGIIHHVRITGLKPSTIYYYRCGDPSRRAMSKIHHFRTMPVSSPSSYPGRIAVVGDLGLTYNTTDTISHLIHNSPDLILLIGDVSYANLYLTNGTSSDCYSCSFPETPIHETYQPRWDYWGRFMENLTSKVPLMVIEGNHEIELQAENKTFEAYSSRFAFPFNESGSSSTLYYSFNAGGIHFVMLGAYIAYDKSAEQYEWLKKDLAKVDRSVTPWLVASWHPPWYSSYTAHYREAECMKEAMEELLYSYGTDIVFNGHVHAYERSNRVYNYELDPCGPVYIVIGDGGNREKMAIEHADDPGKCPEPLTTPDPVMGGFCAWNFTPSDKFCWDRQPDYSALRESSFGHGILEMKNETWALWTWYRNQDSSSEVGDQIYIVRQPDRCPLHHRLVNHC.

The first 19 residues, Met1–Ala19, serve as a signal peptide directing secretion. Asn136 carries N-linked (GlcNAc...) asparagine glycosylation. Asp194 provides a ligand contact to Fe cation. N-linked (GlcNAc...) asparagine glycosylation is present at Asn200. Asp221 and Tyr224 together coordinate Fe cation. Zn(2+) is bound at residue Asp221. N-linked (GlcNAc...) asparagine glycans are attached at residues Asn231 and Asn264. Position 277 (Asn277) interacts with Zn(2+). Residue Asn277 coordinates substrate. N-linked (GlcNAc...) asparagine glycans are attached at residues Asn286 and Asn301. His359 contributes to the Zn(2+) binding site. The active-site Proton donor is the His369. Zn(2+) is bound at residue His396. His396–His398 contacts substrate. His398 serves as a coordination point for Fe cation. An N-linked (GlcNAc...) asparagine glycan is attached at Asn491.

The protein belongs to the metallophosphoesterase superfamily. Purple acid phosphatase family. Homodimer. It depends on Fe cation as a cofactor. Zn(2+) is required as a cofactor. As to expression, expressed in roots, stems, cotyledons, leaves, flowers and siliques.

Its subcellular location is the secreted. The catalysed reaction is 1D-myo-inositol hexakisphosphate + H2O = 1D-myo-inositol 1,2,3,5,6-pentakisphosphate + phosphate. The enzyme catalyses a phosphate monoester + H2O = an alcohol + phosphate. Functionally, acid phosphatase activity with p-nitrophenyl phosphate (pNPP), D-myoinositol 1-phosphate (Ins(1)P1), phytic acid and Myo-inositol hexakisphosphate. Low or no activity with Glc-6-P and ATP. Confers shoot growth stimulation, enhanced salt and osmotic stress tolerance, and ABA insensitivity. May modulate ascorbic acid (AsA) levels by controlling the input of myoinositol into this branch of AsA biosynthesis. The protein is Purple acid phosphatase 15 (PAP15) of Arabidopsis thaliana (Mouse-ear cress).